A 453-amino-acid polypeptide reads, in one-letter code: Bifunctional protein GlmU (453 aa).

A pyrophosphorylase region spans residues 1–226 (MKFSAVILAA…AIEVEGVNDR (226 aa)). UDP-N-acetyl-alpha-D-glucosamine contacts are provided by residues 8-11 (LAAG), Lys22, Gln73, 78-79 (GT), 100-102 (YGD), Gly137, Glu151, Asn166, and Asn224. Asp102 lines the Mg(2+) pocket. Asn224 serves as a coordination point for Mg(2+). The interval 227 to 247 (AQLARLERAFQSMQAQKLLEQ) is linker. Positions 248–453 (GVMLRDPARF…TGWQRPVKQK (206 aa)) are N-acetyltransferase. Positions 330 and 348 each coordinate UDP-N-acetyl-alpha-D-glucosamine. Residue His360 is the Proton acceptor of the active site. UDP-N-acetyl-alpha-D-glucosamine is bound by residues Tyr363 and Asn374. Residues Ala377, 383 to 384 (NY), Ser402, Ala420, and Arg437 each bind acetyl-CoA.

This sequence in the N-terminal section; belongs to the N-acetylglucosamine-1-phosphate uridyltransferase family. It in the C-terminal section; belongs to the transferase hexapeptide repeat family. As to quaternary structure, homotrimer. Mg(2+) is required as a cofactor.

It localises to the cytoplasm. The enzyme catalyses alpha-D-glucosamine 1-phosphate + acetyl-CoA = N-acetyl-alpha-D-glucosamine 1-phosphate + CoA + H(+). The catalysed reaction is N-acetyl-alpha-D-glucosamine 1-phosphate + UTP + H(+) = UDP-N-acetyl-alpha-D-glucosamine + diphosphate. It participates in nucleotide-sugar biosynthesis; UDP-N-acetyl-alpha-D-glucosamine biosynthesis; N-acetyl-alpha-D-glucosamine 1-phosphate from alpha-D-glucosamine 6-phosphate (route II): step 2/2. Its pathway is nucleotide-sugar biosynthesis; UDP-N-acetyl-alpha-D-glucosamine biosynthesis; UDP-N-acetyl-alpha-D-glucosamine from N-acetyl-alpha-D-glucosamine 1-phosphate: step 1/1. The protein operates within bacterial outer membrane biogenesis; LPS lipid A biosynthesis. In terms of biological role, catalyzes the last two sequential reactions in the de novo biosynthetic pathway for UDP-N-acetylglucosamine (UDP-GlcNAc). The C-terminal domain catalyzes the transfer of acetyl group from acetyl coenzyme A to glucosamine-1-phosphate (GlcN-1-P) to produce N-acetylglucosamine-1-phosphate (GlcNAc-1-P), which is converted into UDP-GlcNAc by the transfer of uridine 5-monophosphate (from uridine 5-triphosphate), a reaction catalyzed by the N-terminal domain. The protein is Bifunctional protein GlmU of Vibrio parahaemolyticus serotype O3:K6 (strain RIMD 2210633).